A 662-amino-acid chain; its full sequence is DNA ligase (662 aa).

Residues 32–36, 81–82, and Glu112 each bind NAD(+); these read DAEYD and SL. The N6-AMP-lysine intermediate role is filled by Lys114. NAD(+) contacts are provided by Arg135, Glu170, Lys286, and Lys310. Residues Cys402, Cys405, Cys420, and Cys425 each coordinate Zn(2+). One can recognise a BRCT domain in the interval 583 to 662; the sequence is PKGGPLTGST…AELHAMLRGE (80 aa).

It belongs to the NAD-dependent DNA ligase family. LigA subfamily. It depends on Mg(2+) as a cofactor. Mn(2+) serves as cofactor.

It catalyses the reaction NAD(+) + (deoxyribonucleotide)n-3'-hydroxyl + 5'-phospho-(deoxyribonucleotide)m = (deoxyribonucleotide)n+m + AMP + beta-nicotinamide D-nucleotide.. Its function is as follows. DNA ligase that catalyzes the formation of phosphodiester linkages between 5'-phosphoryl and 3'-hydroxyl groups in double-stranded DNA using NAD as a coenzyme and as the energy source for the reaction. It is essential for DNA replication and repair of damaged DNA. The polypeptide is DNA ligase (Solibacter usitatus (strain Ellin6076)).